The chain runs to 179 residues: Adenine phosphoribosyltransferase (179 aa).

The protein belongs to the purine/pyrimidine phosphoribosyltransferase family. Homodimer.

The protein localises to the cytoplasm. It catalyses the reaction AMP + diphosphate = 5-phospho-alpha-D-ribose 1-diphosphate + adenine. Its pathway is purine metabolism; AMP biosynthesis via salvage pathway; AMP from adenine: step 1/1. Functionally, catalyzes a salvage reaction resulting in the formation of AMP, that is energically less costly than de novo synthesis. This is Adenine phosphoribosyltransferase from Actinobacillus pleuropneumoniae serotype 5b (strain L20).